The following is a 236-amino-acid chain: MSGENRAVVPIESNPEVFTNFAHKLGLKNEWAYFDIYSLTEPELLAFLPRPVKAIVLLFPINEDRKSSTSQQITSSYDVIWFKQSVKNACGLYAILHSLSNNQSLLEPGSDLDNFLKSQSDTSSSKNRFDDVTTDQFVLNVIKENVQTFSTGQSEAPEATADTNLHYITYVEENGGIFELDGRNLSGPLYLGKSDPTATDLIEQELVRVRVASYMENANEEDVLNFAMLGLGPNWE.

In terms of domain architecture, UCH catalytic spans 7 to 233; the sequence is AVVPIESNPE…LNFAMLGLGP (227 aa). An interaction with ubiquitin region spans residues 10–15; that stretch reads PIESNP. Cys90 (nucleophile) is an active-site residue. The interval 149–157 is interaction with ubiquitin; that stretch reads FSTGQSEAP. Residue His166 is the Proton donor of the active site. The interval 219–228 is interaction with ubiquitin; the sequence is NEEDVLNFAM.

Belongs to the peptidase C12 family.

It catalyses the reaction Thiol-dependent hydrolysis of ester, thioester, amide, peptide and isopeptide bonds formed by the C-terminal Gly of ubiquitin (a 76-residue protein attached to proteins as an intracellular targeting signal).. Functionally, deubiquitinating enzyme (DUB) that controls levels of cellular ubiquitin through processing of ubiquitin precursors and ubiquitinated proteins. Thiol protease that recognizes and hydrolyzes a peptide bond at the C-terminal glycine of either ubiquitin or RUB1. Preferentially cleaves ubiquitin from peptides and small adducts. The sequence is that of Ubiquitin carboxyl-terminal hydrolase YUH1 (YUH1) from Saccharomyces cerevisiae (strain ATCC 204508 / S288c) (Baker's yeast).